Here is a 1234-residue protein sequence, read N- to C-terminus: DNA-directed RNA polymerase subunit beta (1234 aa).

Positions 1189-1212 (VLSSQDNDYEEPEENDEEDELNLD) are disordered. Over residues 1195–1212 (NDYEEPEENDEEDELNLD) the composition is skewed to acidic residues.

Belongs to the RNA polymerase beta chain family. The RNAP catalytic core consists of 2 alpha, 1 beta, 1 beta' and 1 omega subunit. When a sigma factor is associated with the core the holoenzyme is formed, which can initiate transcription.

It carries out the reaction RNA(n) + a ribonucleoside 5'-triphosphate = RNA(n+1) + diphosphate. Functionally, DNA-dependent RNA polymerase catalyzes the transcription of DNA into RNA using the four ribonucleoside triphosphates as substrates. This Clostridium kluyveri (strain NBRC 12016) protein is DNA-directed RNA polymerase subunit beta.